The sequence spans 711 residues: Hydroperoxide isomerase ALOXE3 (711 aa).

A PLAT domain is found at 2–119 (AVYRLCVTTG…TVELRPGTAR (118 aa)). The 592-residue stretch at 120 to 711 (TICQDSLPLL…PPLIENSVSI (592 aa)) folds into the Lipoxygenase domain. His408, His413, His588, Asn592, and Ile711 together coordinate Fe cation.

The protein belongs to the lipoxygenase family. Fe cation serves as cofactor. In terms of tissue distribution, predominantly expressed in skin.

The protein localises to the cytoplasm. The enzyme catalyses a hydroperoxyeicosatetraenoate = a hydroxy-epoxy-eicosatetraenoate. It carries out the reaction (12R)-hydroperoxy-(5Z,8Z,10E,14Z)-eicosatetraenoate = (8R)-hydroxy-(11R,12R)-epoxy-(5Z,9E,14Z)-eicosatrienoate. The catalysed reaction is (12S)-hydroperoxy-(5Z,8Z,10E,14Z)-eicosatetraenoate = (8R)-hydroxy-(11S,12S)-epoxy-(5Z,9E,14Z)-eicosatrienoate. It catalyses the reaction (12S)-hydroperoxy-(5Z,8Z,10E,14Z)-eicosatetraenoate = (10R)-hydroxy-(11S,12S)-epoxy-(5Z,8Z,14Z)-eicosatrienoate. The enzyme catalyses (15S)-hydroperoxy-(5Z,8Z,11Z,13E)-eicosatetraenoate = (13R)-hydroxy-(14S,15S)-epoxy-(5Z,8Z,11Z)-eicosatrienoate. It carries out the reaction (5S)-hydroperoxy-(6E,8Z,11Z,14Z)-eicosatetraenoate = 7R-hydroxy-5S,6S-epoxy-(8Z,11Z,14Z)-eicosatrienoate. The catalysed reaction is (13S)-hydroperoxy-(9Z,11E)-octadecadienoate = 11-hydroxy-(12S,13S)-epoxy-(9Z)-octadecenoate. It catalyses the reaction N-[omega-(9R)-hydroperoxy-(10E,12Z)-octadecadienoyloxy]acyl-beta-D-glucosyl-(1&lt;-&gt;1)-octadecasphing-4E-enine = a N-[omega-(9R,10R)-epoxy-(13R)-hydroxy-(11E)-octadecenoyloxy]acyl-beta-D-glucosyl-(1&lt;-&gt;1)-sphing-4E-enine. The enzyme catalyses a N-[omega-(9R)-hydroperoxy-(10E,12Z)-octadecadienoyloxy]-acylsphin-4E-enine = a N-[omega-(9R,10R)-epoxy-(13R)-hydroxy-(11E)-octadecenoyloxy]-acylsphing-4E-enine. It carries out the reaction a hydroperoxyeicosatetraenoate = an oxoeicosatetraenoate + H2O. The catalysed reaction is (12R)-hydroperoxy-(5Z,8Z,10E,14Z)-eicosatetraenoate = 12-oxo-(5Z,8Z,10E,14Z)-eicosatetraenoate + H2O. It catalyses the reaction (12S)-hydroperoxy-(5Z,8Z,10E,14Z)-eicosatetraenoate = 12-oxo-(5Z,8Z,10E,14Z)-eicosatetraenoate + H2O. The enzyme catalyses (15S)-hydroperoxy-(5Z,8Z,11Z,13E)-eicosatetraenoate = 15-oxo-(5Z,8Z,11Z,13E)-eicosatetraenoate + H2O. It carries out the reaction (13S)-hydroperoxy-(9Z,11E)-octadecadienoate = 13-oxo-(9Z,11E)-octadecadienoate + H2O. The catalysed reaction is (8S)-hydroperoxy-(5Z,9E,11Z,14Z)-eicosatetraenoate = (10R)-hydroxy-(8S,9S)-epoxy-(5Z,11Z,14Z)-eicosatrienoate. It catalyses the reaction (8R)-hydroperoxy-(5Z,9E,11Z,14Z)-eicosatetraenoate = 8-oxo-(5Z,9E,11Z,14Z)-eicosatetraenoate + H2O. The enzyme catalyses (8S)-hydroperoxy-(5Z,9E,11Z,14Z)-eicosatetraenoate = 8-oxo-(5Z,9E,11Z,14Z)-eicosatetraenoate + H2O. It functions in the pathway lipid metabolism; hydroperoxy eicosatetraenoic acid biosynthesis. It participates in lipid metabolism; sphingolipid metabolism. Its activity is regulated as follows. Lipoxygenase activity is activated by 13(S)-HPODE leading to an active free ferric enzyme. The lipoxygenase and hydroperoxide isomerase activities are in competition and are reciprocally regulated by oxygen. The oxygen reacts with an epoxyallylic radical intermediate leading to an epoxyallylic peroxyl radical, which, due to its limited reactivity within the enzyme active site, it dissociates and leaves the enzyme in the activated free ferric state. Non-heme iron-containing lipoxygenase which is atypical in that it displays a prominent hydroperoxide isomerase activity and a reduced lipoxygenases activity. The hydroperoxide isomerase activity catalyzes the isomerization of hydroperoxides, derived from arachidonic and linoleic acid by ALOX12B, into hepoxilin-type epoxyalcohols and ketones. In presence of oxygen, oxygenates polyunsaturated fatty acids, including arachidonic acid, to produce fatty acid hydroperoxides. In the skin, acts downstream of ALOX12B on the linoleate moiety of esterified omega-hydroxyacyl-sphingosine (EOS) ceramides to produce an epoxy-ketone derivative, a crucial step in the conjugation of omega-hydroxyceramide to membrane proteins. Therefore plays a crucial role in the synthesis of corneocytes lipid envelope and the establishment of the skin barrier to water loss. In parallel, it may have a signaling function in barrier formation through the production of hepoxilins metabolites. Also plays a role in adipocyte differentiation through hepoxilin A3 and hepoxilin B3 production which in turn activate PPARG. Through the production of hepoxilins in the spinal cord, it may regulate inflammatory tactile allodynia. The polypeptide is Hydroperoxide isomerase ALOXE3 (Homo sapiens (Human)).